The sequence spans 340 residues: Meiotic recombination protein DMC1/LIM15 homolog (340 aa).

Residue 126 to 133 coordinates ATP; sequence GEFRTGKT. Position 230 (Arg-230) interacts with dsDNA. 5 residues coordinate ssDNA: Arg-230, Phe-233, Arg-236, Arg-242, and Arg-311. Arg-236 and Arg-242 together coordinate dsDNA.

This sequence belongs to the RecA family. DMC1 subfamily. As to quaternary structure, double stacked ring-shaped homooctamer. Interacts with BRCA2. Interacts with the MND1-PSMC3IP heterodimer. Interacts with RAD51AP1; the interaction is direct and stimulates DMC1-mediated homologous recombination. As to expression, testis.

Its subcellular location is the nucleus. The protein localises to the chromosome. In terms of biological role, participates in meiotic recombination, specifically in homologous strand assimilation, which is required for the resolution of meiotic double-strand breaks. The protein is Meiotic recombination protein DMC1/LIM15 homolog of Mus musculus (Mouse).